Reading from the N-terminus, the 837-residue chain is Outer membrane usher protein HifC (837 aa).

A signal peptide spans 1–26 (MKTKNFPLNKIAFACTLLLANPVAWA). A disulfide bridge connects residues cysteine 813 and cysteine 833.

This sequence belongs to the fimbrial export usher family.

The protein resides in the cell outer membrane. Functionally, essential for piliation. This is Outer membrane usher protein HifC (hifC) from Haemophilus influenzae.